The following is a 184-amino-acid chain: Guanylate kinase (184 aa).

Positions 4–182 (MGLTVLSGPS…AAARLVALMI (179 aa)) constitute a Guanylate kinase-like domain. 11 to 18 (GPSGVGKD) lines the ATP pocket.

Belongs to the guanylate kinase family.

The protein resides in the cytoplasm. It catalyses the reaction GMP + ATP = GDP + ADP. Essential for recycling GMP and indirectly, cGMP. This is Guanylate kinase from Frankia casuarinae (strain DSM 45818 / CECT 9043 / HFP020203 / CcI3).